The following is a 599-amino-acid chain: Adenine deaminase (599 aa).

This sequence belongs to the metallo-dependent hydrolases superfamily. Adenine deaminase family. The cofactor is Mn(2+).

It catalyses the reaction adenine + H2O + H(+) = hypoxanthine + NH4(+). In Clostridium botulinum (strain Langeland / NCTC 10281 / Type F), this protein is Adenine deaminase.